Consider the following 30-residue polypeptide: Circulin-E (30 aa).

A cross-link (cyclopeptide (Lys-Asp)) is located at residues Lys1–Asp30. 3 disulfides stabilise this stretch: Cys4–Cys20, Cys8–Cys22, and Cys13–Cys27.

Post-translationally, this is a cyclic peptide.

In terms of biological role, probably participates in a plant defense mechanism. Inhibits the cytopathic effects of the human immunodeficiency virus. This is Circulin-E from Chassalia parviflora.